Consider the following 717-residue polypeptide: Homeobox protein araucan (717 aa).

Disordered regions lie at residues 46–80, 94–130, 317–371, 395–418, 478–516, 549–615, and 675–717; these read APAM…PNAL, GGSS…GGGG, NKMT…AIDE, SGGY…YHHQ, TPPP…AGRD, TNNS…ASQR, and ARLG…KFTN. Residues 94 to 103 show a composition bias toward gly residues; the sequence is GGSSAGGGGP. The segment at residues 255 to 317 is a DNA-binding region (homeobox; TALE-type); it reads LAARRKNATR…NARRRLKKEN (63 aa). A compositionally biased stretch (basic and acidic residues) spans 317 to 327; the sequence is NKMTWEPKNRT. Ser336 carries the phosphoserine modification. Residues 337–347 are compositionally biased toward basic and acidic residues; sequence DDEKDKEDLEP. Residues 395–410 show a composition bias toward gly residues; sequence SGGYPGGGGSSSGHPG. 4 stretches are compositionally biased toward low complexity: residues 492–507, 559–589, 599–614, and 687–698; these read QQQQ…AQHQ, PPQQ…GPII, QQQQ…TASQ, and SSGNSSSSSSSS.

Belongs to the TALE/IRO homeobox family.

It is found in the nucleus. In terms of biological role, controls proneural and vein forming genes. Positive transcriptional controller of AC-SC (achaete-scute). May act as an activator that interacts with the transcriptional complex assembled on the AC and SC promoters and participates in transcription initiation. The polypeptide is Homeobox protein araucan (ara) (Drosophila melanogaster (Fruit fly)).